We begin with the raw amino-acid sequence, 367 residues long: MSDVPELIHGPLEDRHRELGASFAEFGGWLMPVSYAGTVSEHNATRTAVGLFDVSHLGKALVRGPGAAQFVNSALTNDLGRIGPGKAQYTLCCTESGGVIDDLIAYYVSDDEIFLVPNAANTAAVVGALQAAAPGGLSITNLHRSYAVLAVQGPCSTDVLTALGLPTEMDYMGYADASYSGVPVRVCRTGYTGEHGYELLPPWESAGVVFDALLAAVSAAGGEPAGLGARDTLRTEMGYPLHGHELSLDISPLQARCGWAVGWRKDAFFGRAALLAEKAAGPRRLLRGLRMVGRGVLRPGLAVLVGDETVGVTTSGTFSPTLQVGIGLALIDSDAGIEDGQQINVDVRGRAVECQVVCPPFVAVKTR.

This sequence belongs to the GcvT family. The glycine cleavage system is composed of four proteins: P, T, L and H.

The catalysed reaction is N(6)-[(R)-S(8)-aminomethyldihydrolipoyl]-L-lysyl-[protein] + (6S)-5,6,7,8-tetrahydrofolate = N(6)-[(R)-dihydrolipoyl]-L-lysyl-[protein] + (6R)-5,10-methylene-5,6,7,8-tetrahydrofolate + NH4(+). Its function is as follows. The glycine cleavage system catalyzes the degradation of glycine. This chain is Aminomethyltransferase, found in Mycobacterium bovis (strain ATCC BAA-935 / AF2122/97).